Consider the following 170-residue polypeptide: Pollen-specific protein C13 (170 aa).

A signal peptide spans 1 to 27 (MASVPAPATTTAAVILCLCVVLSCAAA). Intrachain disulfides connect Cys43–Cys114, Cys46–Cys155, and Cys67–Cys102. The N-linked (GlcNAc...) asparagine glycan is linked to Asn53.

Belongs to the Ole e I family. As to expression, pollen.

The polypeptide is Pollen-specific protein C13 (MGS1) (Zea mays (Maize)).